Reading from the N-terminus, the 63-residue chain is Small integral membrane protein 43 (63 aa).

Important for interaction with SLC2A1 and SLC2A3 stretches follow at residues 7 to 29 (LLLY…FVVI) and 51 to 57 (HREPWGF). A helical transmembrane segment spans residues 9–29 (LYLALFFFLLFLLFLLLFVVI).

In terms of assembly, interacts with glucose transporters SLC2A1/GLUT1 and SLC2A3/GLUT3; the interactions may promote SLC2A1- and SLC2A3-mediated glucose transport to meet the energy needs of mesendoderm differentiation.

The protein localises to the cell membrane. Required for mesendoderm differentiation. Interacts with glucose transporters and promotes glucose uptake. Probably augments the glucose uptake capacity of glucose transporter proteins to meet the energy needs of mesendoderm differentiation. In Homo sapiens (Human), this protein is Small integral membrane protein 43.